Consider the following 460-residue polypeptide: Adenylosuccinate lyase (460 aa).

Residues 15 to 16 (RY), 88 to 90 (NHD), and 120 to 121 (TS) contribute to the N(6)-(1,2-dicarboxyethyl)-AMP site. Histidine 169 acts as the Proton donor/acceptor in catalysis. Glutamine 245 provides a ligand contact to N(6)-(1,2-dicarboxyethyl)-AMP. The Proton donor/acceptor role is filled by serine 293. Residues serine 294, 299–301 (KIN), asparagine 307, arginine 333, and 338–342 (STVLR) each bind N(6)-(1,2-dicarboxyethyl)-AMP.

The protein belongs to the lyase 1 family. Adenylosuccinate lyase subfamily. In terms of assembly, homotetramer. Residues from neighboring subunits contribute catalytic and substrate-binding residues to each active site.

It carries out the reaction N(6)-(1,2-dicarboxyethyl)-AMP = fumarate + AMP. The catalysed reaction is (2S)-2-[5-amino-1-(5-phospho-beta-D-ribosyl)imidazole-4-carboxamido]succinate = 5-amino-1-(5-phospho-beta-D-ribosyl)imidazole-4-carboxamide + fumarate. It participates in purine metabolism; AMP biosynthesis via de novo pathway; AMP from IMP: step 2/2. Its pathway is purine metabolism; IMP biosynthesis via de novo pathway; 5-amino-1-(5-phospho-D-ribosyl)imidazole-4-carboxamide from 5-amino-1-(5-phospho-D-ribosyl)imidazole-4-carboxylate: step 2/2. Catalyzes two reactions in de novo purine nucleotide biosynthesis. Catalyzes the breakdown of 5-aminoimidazole- (N-succinylocarboxamide) ribotide (SAICAR or 2-[5-amino-1-(5-phospho-beta-D-ribosyl)imidazole-4-carboxamido]succinate) to 5-aminoimidazole-4-carboxamide ribotide (AICAR or 5-amino-1-(5-phospho-beta-D-ribosyl)imidazole-4-carboxamide) and fumarate, and of adenylosuccinate (ADS or N(6)-(1,2-dicarboxyethyl)-AMP) to adenosine monophosphate (AMP) and fumarate. This Buchnera aphidicola subsp. Baizongia pistaciae (strain Bp) protein is Adenylosuccinate lyase (purB).